The sequence spans 615 residues: ATP-dependent zinc metalloprotease FtsH (615 aa).

Topologically, residues 1–8 (MAMNKDKP) are cytoplasmic. The chain crosses the membrane as a helical span at residues 9 to 29 (WTLYLLAVGLAVLAAVQFGLF). The Periplasmic portion of the chain corresponds to 30 to 104 (SQPAVQAIPY…FSGVVEDNTV (75 aa)). The chain crosses the membrane as a helical span at residues 105–125 (ATVMGALMPLLMLLALWYFLF). Topologically, residues 126–615 (HGLGQKQGLG…ATYVLVDATK (490 aa)) are cytoplasmic. 198–205 (GPPGTGKT) serves as a coordination point for ATP. His-420 provides a ligand contact to Zn(2+). The active site involves Glu-421. Zn(2+) contacts are provided by His-424 and Asp-497.

In the central section; belongs to the AAA ATPase family. The protein in the C-terminal section; belongs to the peptidase M41 family. As to quaternary structure, homohexamer. Requires Zn(2+) as cofactor.

The protein localises to the cell inner membrane. Acts as a processive, ATP-dependent zinc metallopeptidase for both cytoplasmic and membrane proteins. Plays a role in the quality control of integral membrane proteins. The polypeptide is ATP-dependent zinc metalloprotease FtsH (Pseudomonas putida (strain ATCC 700007 / DSM 6899 / JCM 31910 / BCRC 17059 / LMG 24140 / F1)).